The sequence spans 219 residues: tRNA (guanine-N(7)-)-methyltransferase (219 aa).

Residues E46, E71, D100, and D122 each contribute to the S-adenosyl-L-methionine site. D122 is an active-site residue. A substrate-binding site is contributed by K126. The interaction with RNA stretch occupies residues 128–133 (KHEKRR). Residues D158 and 199–202 (TEYE) each bind substrate.

This sequence belongs to the class I-like SAM-binding methyltransferase superfamily. TrmB family.

It catalyses the reaction guanosine(46) in tRNA + S-adenosyl-L-methionine = N(7)-methylguanosine(46) in tRNA + S-adenosyl-L-homocysteine. It participates in tRNA modification; N(7)-methylguanine-tRNA biosynthesis. Catalyzes the formation of N(7)-methylguanine at position 46 (m7G46) in tRNA. The polypeptide is tRNA (guanine-N(7)-)-methyltransferase (Oenococcus oeni (strain ATCC BAA-331 / PSU-1)).